The following is a 127-amino-acid chain: MALLSAVKGKLISVIGDEDTCVGFLLGGIGEINKNRHPNFMVVDKNTAVSEIEDCFKRFIKRDDIDIILINQNYAEMIRHVIDAHTSPTPAVLEIPSKDHPYDASKDSILRRAKGMFNPDDMVANRG.

It belongs to the V-ATPase F subunit family. As to quaternary structure, V-ATPase is a heteromultimeric enzyme made up of two complexes: the ATP-hydrolytic V1 complex and the proton translocation V0 complex. The V1 complex consists of three catalytic AB heterodimers that form a heterohexamer, three peripheral stalks each consisting of EG heterodimers, one central rotor including subunits D and F, and the regulatory subunits C and H. The proton translocation complex V0 consists of the proton transport subunit a, a ring of proteolipid subunits c9c'', rotary subunit d, subunits e and f, and the accessory subunits VhaAC45 and ATP6AP2.

In terms of biological role, subunit of the V1 complex of vacuolar(H+)-ATPase (V-ATPase), a multisubunit enzyme composed of a peripheral complex (V1) that hydrolyzes ATP and a membrane integral complex (V0) that translocates protons. V-ATPase is responsible for acidifying and maintaining the pH of intracellular compartments and in some cell types, is targeted to the plasma membrane, where it is responsible for acidifying the extracellular environment. This chain is V-type proton ATPase subunit F, found in Aedes aegypti (Yellowfever mosquito).